The sequence spans 75 residues: Beta-defensin 30 (75 aa).

A signal peptide spans methionine 1 to serine 22. 3 disulfide bridges follow: cysteine 35–cysteine 62, cysteine 42–cysteine 56, and cysteine 46–cysteine 63.

This sequence belongs to the beta-defensin family.

The protein localises to the secreted. Its function is as follows. Has antibacterial activity. The sequence is that of Beta-defensin 30 (Defb30) from Rattus norvegicus (Rat).